Consider the following 473-residue polypeptide: ATP synthase subunit beta (473 aa).

Position 153–160 (153–160) interacts with ATP; the sequence is GGAGVGKT.

It belongs to the ATPase alpha/beta chains family. F-type ATPases have 2 components, CF(1) - the catalytic core - and CF(0) - the membrane proton channel. CF(1) has five subunits: alpha(3), beta(3), gamma(1), delta(1), epsilon(1). CF(0) has three main subunits: a(1), b(2) and c(9-12). The alpha and beta chains form an alternating ring which encloses part of the gamma chain. CF(1) is attached to CF(0) by a central stalk formed by the gamma and epsilon chains, while a peripheral stalk is formed by the delta and b chains.

The protein resides in the cell membrane. The enzyme catalyses ATP + H2O + 4 H(+)(in) = ADP + phosphate + 5 H(+)(out). Its function is as follows. Produces ATP from ADP in the presence of a proton gradient across the membrane. The catalytic sites are hosted primarily by the beta subunits. This is ATP synthase subunit beta from Rickettsia africae (strain ESF-5).